Here is a 79-residue protein sequence, read N- to C-terminus: Sulfur carrier protein TusA (79 aa).

Residue C15 is the Cysteine persulfide intermediate of the active site.

It belongs to the sulfur carrier protein TusA family. Interacts with IscS.

The protein localises to the cytoplasm. It participates in tRNA modification. Functionally, sulfur carrier protein involved in sulfur trafficking in the cell. Part of a sulfur-relay system required for 2-thiolation during synthesis of 2-thiouridine of the modified wobble base 5-methylaminomethyl-2-thiouridine (mnm(5)s(2)U) in tRNA. Interacts with IscS and stimulates its cysteine desulfurase activity. Accepts an activated sulfur from IscS, which is then transferred to TusD, and thus determines the direction of sulfur flow from IscS to 2-thiouridine formation. Also appears to be involved in sulfur transfer for the biosynthesis of molybdopterin. The chain is Sulfur carrier protein TusA from Buchnera aphidicola subsp. Baizongia pistaciae (strain Bp).